We begin with the raw amino-acid sequence, 329 residues long: Phenylalanine--tRNA ligase alpha subunit (329 aa).

Residue E254 participates in Mg(2+) binding.

The protein belongs to the class-II aminoacyl-tRNA synthetase family. Phe-tRNA synthetase alpha subunit type 1 subfamily. In terms of assembly, tetramer of two alpha and two beta subunits. It depends on Mg(2+) as a cofactor.

It localises to the cytoplasm. It catalyses the reaction tRNA(Phe) + L-phenylalanine + ATP = L-phenylalanyl-tRNA(Phe) + AMP + diphosphate + H(+). The sequence is that of Phenylalanine--tRNA ligase alpha subunit from Histophilus somni (strain 129Pt) (Haemophilus somnus).